A 221-amino-acid polypeptide reads, in one-letter code: Small ribosomal subunit protein uS5 (221 aa).

In terms of domain architecture, S5 DRBM spans 46–109 (LKDEVIDIKR…INAKLNIMEI (64 aa)).

The protein belongs to the universal ribosomal protein uS5 family. In terms of assembly, part of the 30S ribosomal subunit. Contacts protein S4.

Functionally, with S4 and S12 plays an important role in translational accuracy. The sequence is that of Small ribosomal subunit protein uS5 from Thermoplasma acidophilum (strain ATCC 25905 / DSM 1728 / JCM 9062 / NBRC 15155 / AMRC-C165).